The following is a 145-amino-acid chain: Large-conductance mechanosensitive channel (145 aa).

The next 3 helical transmembrane spans lie at 14 to 34 (VMDL…VKSL), 38 to 58 (LIMP…YFLP), and 81 to 101 (GSFL…FLMV).

This sequence belongs to the MscL family. As to quaternary structure, homopentamer.

It is found in the cell inner membrane. In terms of biological role, channel that opens in response to stretch forces in the membrane lipid bilayer. May participate in the regulation of osmotic pressure changes within the cell. The sequence is that of Large-conductance mechanosensitive channel from Rhizobium etli (strain CIAT 652).